The primary structure comprises 156 residues: uncharacterized protein (156 aa).

This is an uncharacterized protein from Methanocaldococcus jannaschii (strain ATCC 43067 / DSM 2661 / JAL-1 / JCM 10045 / NBRC 100440) (Methanococcus jannaschii).